Reading from the N-terminus, the 403-residue chain is Tyrosine--tRNA ligase (403 aa).

The short motif at 42–51 is the 'HIGH' region element; it reads PTAPDLHLGH. Positions 226–230 match the 'KMSKS' region motif; the sequence is KMSKS. Residue lysine 229 coordinates ATP. The S4 RNA-binding domain maps to 336–396; the sequence is MPISAVLNKA…GKKAFGRITL (61 aa).

This sequence belongs to the class-I aminoacyl-tRNA synthetase family. TyrS type 2 subfamily. Homodimer.

It localises to the cytoplasm. It carries out the reaction tRNA(Tyr) + L-tyrosine + ATP = L-tyrosyl-tRNA(Tyr) + AMP + diphosphate + H(+). In terms of biological role, catalyzes the attachment of tyrosine to tRNA(Tyr) in a two-step reaction: tyrosine is first activated by ATP to form Tyr-AMP and then transferred to the acceptor end of tRNA(Tyr). The sequence is that of Tyrosine--tRNA ligase from Pseudomonas syringae pv. tomato (strain ATCC BAA-871 / DC3000).